Here is a 207-residue protein sequence, read N- to C-terminus: Probable GTP-binding protein EngB (207 aa).

The 176-residue stretch at Gly-24–Leu-199 folds into the EngB-type G domain. Residues Gly-32–Ser-39, Gly-59–Gln-63, Asp-77–Gly-80, Thr-144–Asp-147, and Tyr-178–Gly-180 each bind GTP. Mg(2+) is bound by residues Ser-39 and Thr-61.

This sequence belongs to the TRAFAC class TrmE-Era-EngA-EngB-Septin-like GTPase superfamily. EngB GTPase family. The cofactor is Mg(2+).

Functionally, necessary for normal cell division and for the maintenance of normal septation. The protein is Probable GTP-binding protein EngB of Xanthomonas oryzae pv. oryzae (strain MAFF 311018).